Here is a 147-residue protein sequence, read N- to C-terminus: uncharacterized protein (147 aa).

Positions 50–140 (NQKKAIIVDT…WNSENLPTTF (91 aa)) constitute a Rhodanese domain.

This is an uncharacterized protein from Buchnera aphidicola subsp. Schizaphis graminum (strain Sg).